Reading from the N-terminus, the 906-residue chain is Transmembrane channel-like protein 2 (906 aa).

The tract at residues 1–150 is disordered; that stretch reads MSHQVKGLKE…SASGGESLSE (150 aa). Topologically, residues 1-263 are cytoplasmic; the sequence is MSHQVKGLKE…IFLRWMYGVN (263 aa). A compositionally biased stretch (basic residues) spans 69–79; the sequence is PRRKQTGRRRH. A compositionally biased stretch (basic and acidic residues) spans 80–127; sequence REELGEQERGEAERTCEGRRKRDERASFQERTAAPKREKEIPRREEKS. The segment covering 135 to 147 has biased composition (low complexity); the sequence is SSSLASSASGGES. A helical transmembrane segment spans residues 264 to 284; sequence LVLFGLIFGLVIIPEVLMGMP. The Extracellular portion of the chain corresponds to 285 to 336; sequence YGSIPRKTVPRAEEEKAMDFSVLWDFEGYIKYSALFYGYYNNQRTIGWLRYR. Residues 337–357 traverse the membrane as a helical segment; the sequence is LPMAYFMVGVSVFGYSLIIVI. The Cytoplasmic portion of the chain corresponds to 358-431; that stretch reads RSMASNTQGS…NIHLTRFLRV (74 aa). Residues 432 to 452 form a helical membrane-spanning segment; that stretch reads LANFLIICCLCGSGYLIYFVV. Residues 453-508 are Extracellular-facing; that stretch reads KRSQQFSKMQNVSWYERNEVEIVMSLLGMFCPPLFETIAALENYHPRTGLKWQLGR. The chain crosses the membrane as a helical span at residues 509 to 529; that stretch reads IFALFLGNLYTFLLALMDDVH. Residues 530–693 lie on the Cytoplasmic side of the membrane; the sequence is LKLANEETIK…RVFKASRSNN (164 aa). A helical transmembrane segment spans residues 694–714; it reads FYMGLLLLVLFLSLLPVAYTI. The Extracellular portion of the chain corresponds to 715–750; the sequence is MSLPPSFDCGPFSGKNRMYDVLQETIENDFPTFLGK. A helical membrane pass occupies residues 751 to 771; it reads IFAFLANPGLIIPAILLMFLA. The Cytoplasmic portion of the chain corresponds to 772–906; it reads IYYLNSVSKS…SGKSAQRPPH (135 aa). The tract at residues 800–906 is disordered; the sequence is EKSHKSVKGK…SGKSAQRPPH (107 aa). Composition is skewed to polar residues over residues 820–846, 854–866, and 886–900; these read KSSS…QSQA, PGTS…TTLP, and APSQ…SGKS.

This sequence belongs to the TMC family. As to quaternary structure, forms the MET channel composed of TMC dimer (TMC1 or TMC2), TMIE, TOMT, CIB (CIB2 or CIB3), LHFPL5 and PDH15. The interaction of TMC1 and TMC2 with TOMT is required for the transportation of TMC1/2 into the stereocilia of hair cells. Interacts (via N-terminus) with both isoforms CD1 and CD3 of PCDH15. Can form a heterodimer with TMC1, TMC5 or TMC7. In terms of tissue distribution, detected in fetal cochlea.

It is found in the cell membrane. It catalyses the reaction Ca(2+)(in) = Ca(2+)(out). Functionally, pore-forming subunit of the mechanotransducer (MET) non-selective cation channel complex located at the tips of stereocilia of cochlear hair cells and that mediates sensory transduction in the auditory system. The MET complex is composed of two dimeric pore-forming ion-conducting transmembrane TMC (TMC1 or TMC2) subunits, and aided by several auxiliary proteins including LHFPL5, TMIE, CIB2/3 and TOMT, and the tip-link PCDH15. MET channel is activated by tension in the tip-link extending from the side wall of one stereocilium to the tip of the adjacent shorter stereocilium, where the channel is located. TMC2 MET channel is highly permeable to calcium and likely transports monovalent cations. Also involved in vestibular hair cell transduction current of the mammalian inner ear. The protein is Transmembrane channel-like protein 2 of Homo sapiens (Human).